Reading from the N-terminus, the 741-residue chain is Type VI secretion system spike protein VgrG1b (741 aa).

2 stretches are compositionally biased toward polar residues: residues 614–629 (SIGANRSESVGNNETI) and 649–663 (GNQSTSIGKNESRSV). The interval 614-678 (SIGANRSESV…TSVGKDDSLD (65 aa)) is disordered.

It belongs to the VgrG protein family.

The protein resides in the secreted. In terms of biological role, part of the H1 type VI secretion system (H1-T6SS) specialized secretion system, which delivers several virulence factors in both prokaryotic and eukaryotic cells during infection. Allows the delivery of the Tse7 toxin to target cells where it exerts toxicity through its nuclease domain. In Pseudomonas aeruginosa (strain ATCC 15692 / DSM 22644 / CIP 104116 / JCM 14847 / LMG 12228 / 1C / PRS 101 / PAO1), this protein is Type VI secretion system spike protein VgrG1b.